The sequence spans 89 residues: Small ribosomal subunit protein uS14 (89 aa).

Belongs to the universal ribosomal protein uS14 family. In terms of assembly, part of the 30S ribosomal subunit. Contacts proteins S3 and S10.

Functionally, binds 16S rRNA, required for the assembly of 30S particles and may also be responsible for determining the conformation of the 16S rRNA at the A site. This chain is Small ribosomal subunit protein uS14, found in Chlorobium luteolum (strain DSM 273 / BCRC 81028 / 2530) (Pelodictyon luteolum).